The following is a 195-amino-acid chain: Probable GTP-binding protein EngB (195 aa).

The EngB-type G domain occupies 24 to 195 (GLTEVALSGR…EIWNFIETYI (172 aa)). GTP contacts are provided by residues 32–39 (GRSNVGKS), 59–63 (GKTQT), 77–80 (DVPG), 144–147 (TKED), and 176–178 (YSS). 2 residues coordinate Mg(2+): serine 39 and threonine 61.

The protein belongs to the TRAFAC class TrmE-Era-EngA-EngB-Septin-like GTPase superfamily. EngB GTPase family. Mg(2+) is required as a cofactor.

Functionally, necessary for normal cell division and for the maintenance of normal septation. The sequence is that of Probable GTP-binding protein EngB from Staphylococcus epidermidis (strain ATCC 35984 / DSM 28319 / BCRC 17069 / CCUG 31568 / BM 3577 / RP62A).